Reading from the N-terminus, the 356-residue chain is tRNA N6-adenosine threonylcarbamoyltransferase (356 aa).

Positions 115 and 119 each coordinate Fe cation. Substrate-binding positions include 138–142 (LVSGG), Asp-171, Gly-184, and Asn-283. Residue Asp-311 participates in Fe cation binding.

Belongs to the KAE1 / TsaD family. Fe(2+) is required as a cofactor.

The protein resides in the cytoplasm. It carries out the reaction L-threonylcarbamoyladenylate + adenosine(37) in tRNA = N(6)-L-threonylcarbamoyladenosine(37) in tRNA + AMP + H(+). Functionally, required for the formation of a threonylcarbamoyl group on adenosine at position 37 (t(6)A37) in tRNAs that read codons beginning with adenine. Is involved in the transfer of the threonylcarbamoyl moiety of threonylcarbamoyl-AMP (TC-AMP) to the N6 group of A37, together with TsaE and TsaB. TsaD likely plays a direct catalytic role in this reaction. The chain is tRNA N6-adenosine threonylcarbamoyltransferase from Prochlorococcus marinus (strain MIT 9312).